A 455-amino-acid polypeptide reads, in one-letter code: Probable alpha-galactosidase B (455 aa).

An N-terminal signal peptide occupies residues Met1 to Ala16. Intrachain disulfides connect Cys39–Cys71 and Cys121–Cys151. Asn42 carries an N-linked (GlcNAc...) asparagine glycan. Asp149 acts as the Nucleophile in catalysis. N-linked (GlcNAc...) asparagine glycosylation is found at Asn177 and Asn192. A substrate-binding site is contributed by Asn222–Ala226. Residue Asp244 is the Proton donor of the active site. N-linked (GlcNAc...) asparagine glycosylation occurs at Asn395.

The protein belongs to the glycosyl hydrolase 27 family.

It is found in the secreted. The enzyme catalyses Hydrolysis of terminal, non-reducing alpha-D-galactose residues in alpha-D-galactosides, including galactose oligosaccharides, galactomannans and galactolipids.. Functionally, hydrolyzes a variety of simple alpha-D-galactoside as well as more complex molecules such as oligosaccharides and polysaccharides. The sequence is that of Probable alpha-galactosidase B (aglB) from Emericella nidulans (strain FGSC A4 / ATCC 38163 / CBS 112.46 / NRRL 194 / M139) (Aspergillus nidulans).